The chain runs to 1004 residues: NADH:acrylate oxidoreductase (1004 aa).

Thr455 is subject to FMN phosphoryl threonine. FAD-binding residues include Ala508, Glu527, Asn535, Thr536, Gly540, Gly541, and Asp775. Arg834 (proton donor) is an active-site residue. FAD-binding residues include His941, Glu970, Ala985, and Leu986.

Belongs to the FAD-dependent oxidoreductase 2 family. FRD/SDH subfamily. It depends on FAD as a cofactor. Requires FMN as cofactor. Is flavinylated on Thr-455 by ApbE, encoded in a neighboring gene. Flavinylation is essential for catalytic activity.

The enzyme catalyses acrylate + NADH + H(+) = propanoate + NAD(+). In terms of biological role, catalyzes the NADH-dependent reduction of acrylate to propanoate. The principal role of ARD in Vibrio seems to be the energy-saving detoxification of acrylate coming from the environment. May also use acrylate as the terminal electron acceptor for NADH regeneration at oxygen deficiency. NADPH cannot replace NADH as the electron donor. Is also able to reduce methacrylate in vitro, but with a much lower efficiency. This Vibrio harveyi (Beneckea harveyi) protein is NADH:acrylate oxidoreductase.